We begin with the raw amino-acid sequence, 205 residues long: Probable GTP-binding protein EngB (205 aa).

The EngB-type G domain occupies 22-195 (NLPEVALVGR…LDLLDYFWNG (174 aa)). GTP-binding positions include 30–37 (GRSNVGKS), 57–61 (GKTQT), 75–78 (DLPG), 142–145 (TKAD), and 174–176 (FSA). 2 residues coordinate Mg(2+): S37 and T59.

Belongs to the TRAFAC class TrmE-Era-EngA-EngB-Septin-like GTPase superfamily. EngB GTPase family. It depends on Mg(2+) as a cofactor.

In terms of biological role, necessary for normal cell division and for the maintenance of normal septation. The protein is Probable GTP-binding protein EngB of Heliobacterium modesticaldum (strain ATCC 51547 / Ice1).